The primary structure comprises 2718 residues: E3 SUMO-protein ligase RanBP2 (2718 aa).

The tract at residues 1–100 (MFTTRKEVDA…DPRQSEVVID (100 aa)) is sufficient for interaction with Hsp83. Positions 1–200 (MFTTRKEVDA…EKMKIDQAFN (200 aa)) are sufficient for interaction with piwi. 2 TPR repeats span residues 26–58 (DIKGLAVARLYMKVQEYPKAIEYLNGYLRVRDD) and 59–94 (AVGHNMIATCYSRLNPPDVTEALQHYQRSIQIDPRQ). Disordered stretches follow at residues 796-816 (QQDRNSRGIDNSFGSPDVHNN) and 937-959 (EHQQQQQHQQQQSHNQGAIHPVV). Polar residues predominate over residues 803–816 (GIDNSFGSPDVHNN). Residues 808–809 (FG) form repeat 1. The tract at residues 808-2581 (FGSPDVHNNS…GEENETKLFG (1774 aa)) is 27 X 2 AA repeats of F-G. Residues 938–948 (HQQQQQHQQQQ) show a composition bias toward low complexity. 3 repeat units span residues 1028–1029 (FG), 1035–1036 (FG), and 1104–1105 (FG). Residues 1181–1208 (QPVEKEPPANVVITSSDPLPKPTTASVQ) are disordered. Residues 1192–1208 (VITSSDPLPKPTTASVQ) show a composition bias toward polar residues. Residues 1252 to 1253 (FG) form repeat 5. 2 disordered regions span residues 1263 to 1314 (FKTQ…KPII) and 1483 to 1502 (NKPQEQTKTQPNPDPPATAA). Over residues 1284 to 1299 (NQSGATDPNKTLPQDT) the composition is skewed to polar residues. The RanBD1 1 domain occupies 1309 to 1445 (DFKPIIPLPD…FTKASEAAKS (137 aa)). Over residues 1483 to 1493 (NKPQEQTKTQP) the composition is skewed to polar residues. Tandem repeats lie at residues 1506–1507 (FG), 1539–1540 (FG), 1547–1548 (FG), and 1552–1553 (FG). One can recognise a RanBD1 2 domain in the interval 1605–1742 (QFVPVIALPD…VQKAQQSIGN (138 aa)). The disordered stretch occupies residues 1738-1761 (QSIGNEPKKEEVPSAAGEKEKPIK). Residues 1743–1760 (EPKKEEVPSAAGEKEKPI) show a composition bias toward basic and acidic residues. Repeat unit 10 spans residues 1763 to 1764 (FG). A RanBP2-type 1 zinc finger spans residues 1770–1799 (KAGSWNCQACYTNNGQDQLYCLACQEPKDA). 4 repeat units span residues 1826-1827 (FG), 1842-1843 (FG), 1874-1875 (FG), and 1883-1884 (FG). The segment at 1890–1919 (AVGSWSCSACYVNNPGESLYCSACDAPKND) adopts a RanBP2-type 2 zinc-finger fold. Tandem repeats lie at residues 1942–1943 (FG) and 1944–1945 (FG). Disordered regions lie at residues 1981-2021 (FTFS…TYFS), 2154-2204 (EDSP…THEV), and 2239-2273 (SLSRNNSSASEASKTPSSAFIFGSTDKSEPGKDAG). A compositionally biased stretch (acidic residues) spans 2002 to 2016 (EDEDNDSQEVEEEEN). In terms of domain architecture, RanBD1 3 spans 2019–2151 (YFSPVIPLPD…IKNALNETAK (133 aa)). The span at 2161 to 2175 (SVSQSTEANKPSQKN) shows a compositional bias: polar residues. The span at 2239–2257 (SLSRNNSSASEASKTPSSA) shows a compositional bias: low complexity. Repeat copies occupy residues 2260–2261 (FG), 2313–2314 (FG), 2332–2333 (FG), 2352–2353 (FG), 2360–2361 (FG), 2366–2367 (FG), 2393–2394 (FG), 2399–2400 (FG), 2415–2416 (FG), 2421–2422 (FG), and 2580–2581 (FG). The interval 2320-2346 (AEQQKKDSSESVFGGNKADSQSPATQE) is disordered. In terms of domain architecture, RanBD1 4 spans 2556–2699 (HYDAIVELPD…VNSCIKRAKA (144 aa)).

Belongs to the RanBP2 E3 ligase family. As to quaternary structure, part of the nuclear pore complex. Forms a complex with Nxt1, sbr/Nxf1 and RanGAP. Interacts (via TPR repeats) with Hsp83; the interaction is required for the nuclear import of the sesquiterpenoid juvenile hormone receptor Met. Interacts (via N-terminus) with piwi. Expressed in both oocytes and nurse cells (at protein level).

The protein resides in the nucleus. The protein localises to the nuclear pore complex. Functionally, E3 SUMO-protein ligase. Component of the nuclear pore complex (NPC), a complex required for trafficking across the nuclear envelope. Required for nuclear import of nuclear localization signal (NLS)-containing proteins in an importin alpha/importin beta-dependent manner, but also for the nuclear import of specific proteins such as phosphorylated Mad or the sesquiterpenoid juvenile hormone receptor Met as part of the juvenile hormone signal transduction pathway. Plays a role in nuclear mRNA export by recruiting the mRNA transport complex composed of Nxt1 and sbr/Nxf1 to the NPC. Essential during germline development for transposon silencing and piRNA biogenesis probably by regulating piwi localization to the nucleus. During oogenesis, required to form granules that modulate the biogenesis of annulate lamellae containing nuclear pore complex components. The protein is E3 SUMO-protein ligase RanBP2 of Drosophila melanogaster (Fruit fly).